We begin with the raw amino-acid sequence, 958 residues long: Protein translocase subunit SecA (958 aa).

ATP is bound by residues Q86, 104–108 (GEGKT), and D494. 2 disordered regions span residues 863-883 (AAAT…AEKT) and 902-937 (QPIS…GTGK). Zn(2+) contacts are provided by C941, C943, C952, and H953.

This sequence belongs to the SecA family. As to quaternary structure, monomer and homodimer. Part of the essential Sec protein translocation apparatus which comprises SecA, SecYEG and auxiliary proteins SecDF. Other proteins may also be involved. Zn(2+) is required as a cofactor.

The protein resides in the cell membrane. Its subcellular location is the cytoplasm. It carries out the reaction ATP + H2O + cellular proteinSide 1 = ADP + phosphate + cellular proteinSide 2.. Functionally, part of the Sec protein translocase complex. Interacts with the SecYEG preprotein conducting channel. Has a central role in coupling the hydrolysis of ATP to the transfer of proteins into and across the cell membrane, serving as an ATP-driven molecular motor driving the stepwise translocation of polypeptide chains across the membrane. This chain is Protein translocase subunit SecA, found in Bifidobacterium adolescentis (strain ATCC 15703 / DSM 20083 / NCTC 11814 / E194a).